A 1388-amino-acid polypeptide reads, in one-letter code: Peroxisomal ATPase PEX6 (1388 aa).

Disordered stretches follow at residues 1–29 (MTTSELVPPPPARRSPRTRRRRQDKPALS), 169–192 (EGTFFRDRPNKGKGKAPAQPDTPE), 262–287 (RGQSAPAIPPNRSLNGVPEDDEDDTA), 302–323 (DAATTEMDTVTETEESDLSGVD), and 346–365 (TTASGVSTMQPGTPMTIGRG). A compositionally biased stretch (basic residues) spans 14-23 (RSPRTRRRRQ). Residues 169-178 (EGTFFRDRPN) are compositionally biased toward basic and acidic residues. Over residues 310 to 323 (TVTETEESDLSGVD) the composition is skewed to acidic residues. The segment covering 346-358 (TTASGVSTMQPGT) has biased composition (polar residues). 1034–1041 (GPPGTGKT) serves as a coordination point for ATP. The disordered stretch occupies residues 1297-1388 (GPPEKDRQQQ…GTASDDEGLY (92 aa)). The segment covering 1319-1332 (VSGSSVVSKGKGKA) has biased composition (low complexity).

The protein belongs to the AAA ATPase family. In terms of assembly, interacts with PEX1; forming the PEX1-PEX6 AAA ATPase complex, which is composed of a heterohexamer formed by a trimer of PEX1-PEX6 dimers.

It is found in the cytoplasm. Its subcellular location is the cytosol. It localises to the peroxisome membrane. The enzyme catalyses ATP + H2O = ADP + phosphate + H(+). Its function is as follows. Component of the PEX1-PEX6 AAA ATPase complex, a protein dislocase complex that mediates the ATP-dependent extraction of the PEX5 receptor from peroxisomal membranes, an essential step for PEX5 recycling. Specifically recognizes PEX5 monoubiquitinated at 'Cys-6', and pulls it out of the peroxisome lumen through the PEX2-PEX10-PEX12 retrotranslocation channel. Extraction by the PEX1-PEX6 AAA ATPase complex is accompanied by unfolding of the TPR repeats and release of bound cargo from PEX5. This Colletotrichum orbiculare (strain 104-T / ATCC 96160 / CBS 514.97 / LARS 414 / MAFF 240422) (Cucumber anthracnose fungus) protein is Peroxisomal ATPase PEX6 (PEX6).